The sequence spans 246 residues: MITHKFEHPLNEKTRIYLRVESLLRQLHLSSAFSDAQQYQLFFRSIFDLIEIFEQIQLKSELAKDIEKQRVTYKSWLDVEGVDQEMLTSLLNDISHIYRELMQAERFGQSLKEDRFLSAIRQRFNLPGGSCCFDLPALHYWLHLPLDKRVRDAETWMDSLQPLYEALTLWLKLTRETGHFKDQIARTGFFQSDADEANILRLSIPMQYGAYPMISGHKNRFAIKFMSFETGQACTQDIEFELAICS.

Belongs to the ZapD family. As to quaternary structure, interacts with FtsZ.

The protein localises to the cytoplasm. Functionally, cell division factor that enhances FtsZ-ring assembly. Directly interacts with FtsZ and promotes bundling of FtsZ protofilaments, with a reduction in FtsZ GTPase activity. This is Cell division protein ZapD from Vibrio atlanticus (strain LGP32) (Vibrio splendidus (strain Mel32)).